Consider the following 549-residue polypeptide: Glucose-6-phosphate isomerase (549 aa).

Lys80, Lys228, and Lys234 each carry N6-acetyllysine. Residue Glu355 is the Proton donor of the active site. Catalysis depends on residues His386 and Lys514.

It belongs to the GPI family.

It is found in the cytoplasm. The enzyme catalyses alpha-D-glucose 6-phosphate = beta-D-fructose 6-phosphate. Its pathway is carbohydrate biosynthesis; gluconeogenesis. The protein operates within carbohydrate degradation; glycolysis; D-glyceraldehyde 3-phosphate and glycerone phosphate from D-glucose: step 2/4. Functionally, catalyzes the reversible isomerization of glucose-6-phosphate to fructose-6-phosphate. This Shigella boydii serotype 4 (strain Sb227) protein is Glucose-6-phosphate isomerase.